The primary structure comprises 941 residues: Isoleucine--tRNA ligase (941 aa).

The 'HIGH' region signature appears at 69–79; sequence PYANGDIHIGH. Glu589 provides a ligand contact to L-isoleucyl-5'-AMP. The 'KMSKS' region signature appears at 630–634; the sequence is KMSKS. Residue Lys633 coordinates ATP. Residues Cys915, Cys918, Cys932, and Cys935 each coordinate Zn(2+).

The protein belongs to the class-I aminoacyl-tRNA synthetase family. IleS type 1 subfamily. Monomer. The cofactor is Zn(2+).

It localises to the cytoplasm. The catalysed reaction is tRNA(Ile) + L-isoleucine + ATP = L-isoleucyl-tRNA(Ile) + AMP + diphosphate. In terms of biological role, catalyzes the attachment of isoleucine to tRNA(Ile). As IleRS can inadvertently accommodate and process structurally similar amino acids such as valine, to avoid such errors it has two additional distinct tRNA(Ile)-dependent editing activities. One activity is designated as 'pretransfer' editing and involves the hydrolysis of activated Val-AMP. The other activity is designated 'posttransfer' editing and involves deacylation of mischarged Val-tRNA(Ile). This chain is Isoleucine--tRNA ligase, found in Zymomonas mobilis subsp. mobilis (strain ATCC 31821 / ZM4 / CP4).